The primary structure comprises 472 residues: MSTGTLYDKVWNRHAVRELPTGETQLFVGLHLIHEVTSPQAFGMLEERDLSVAFPARTFATTDHIIPTADLERPFGDDQAETMLQVLERNTEAYDITFFDPSSGAQGIVHVVGPEQGLTQPGMTIVCGDSHTSTHGAFGTLGFGIGTSQIRDVLATQCIAMEKQDVRRIQVDGALGEGVYAKDIILKIIGELGVEGGIGYVYEYGGPAIKGLSMEGRMSICNMSVEGGARAGYVNPDLTTFEYMKGRPHAPSGAAWERAVDCWQQIQSDPDATYDDTVTFDGSAIEPMVTWGITPGQALGISEPIPDPARMDSGDRATAEKALDHMDLRPGRTMEGVNVDVAFLGSCTNARITDLREAASLLERLGRPVADDVRAMVVPGSQGVKQQAEDEGLADTFREAGFDWRGAGCSMCLGMNQDQLEGRELCASSSNRNFIGRQGSKDGRTVLMSPAMVVAAAVEGEVTDVRRLMRET.

The [4Fe-4S] cluster site is built by C347, C409, and C412.

The protein belongs to the aconitase/IPM isomerase family. LeuC type 1 subfamily. In terms of assembly, heterodimer of LeuC and LeuD. It depends on [4Fe-4S] cluster as a cofactor.

It catalyses the reaction (2R,3S)-3-isopropylmalate = (2S)-2-isopropylmalate. It participates in amino-acid biosynthesis; L-leucine biosynthesis; L-leucine from 3-methyl-2-oxobutanoate: step 2/4. Its function is as follows. Catalyzes the isomerization between 2-isopropylmalate and 3-isopropylmalate, via the formation of 2-isopropylmaleate. In Salinibacter ruber (strain DSM 13855 / M31), this protein is 3-isopropylmalate dehydratase large subunit.